Here is a 1024-residue protein sequence, read N- to C-terminus: Eukaryotic translation initiation factor 3 subunit A (1024 aa).

Residues 331–508 (VISSNAPGTG…QAITFQDDVF (178 aa)) form the PCI domain. 2 coiled-coil regions span residues 575 to 717 (AAED…REEA) and 777 to 889 (KRRG…RRSR). Basic and acidic residues-rich tracts occupy residues 797-866 (KERR…ERRA) and 873-886 (DKQRQREEEAEANR). 2 disordered regions span residues 797–973 (KERR…GAYR) and 1001–1024 (AAAAESDGFTEVKKNVYRPPGRRA). 2 stretches are compositionally biased toward low complexity: residues 890–906 (AAGTGAAPAQELAAADA) and 946–971 (KEAAGGNATAAPSAPAAAPAPASSGA).

The protein belongs to the eIF-3 subunit A family. Component of the eukaryotic translation initiation factor 3 (eIF-3) complex.

Its subcellular location is the cytoplasm. Functionally, RNA-binding component of the eukaryotic translation initiation factor 3 (eIF-3) complex, which is involved in protein synthesis of a specialized repertoire of mRNAs and, together with other initiation factors, stimulates binding of mRNA and methionyl-tRNAi to the 40S ribosome. The eIF-3 complex specifically targets and initiates translation of a subset of mRNAs involved in cell proliferation. The polypeptide is Eukaryotic translation initiation factor 3 subunit A (Mycosarcoma maydis (Corn smut fungus)).